The sequence spans 300 residues: tRNA pseudouridine synthase B (300 aa).

The active-site Nucleophile is Asp-38.

Belongs to the pseudouridine synthase TruB family. Type 1 subfamily.

It carries out the reaction uridine(55) in tRNA = pseudouridine(55) in tRNA. Responsible for synthesis of pseudouridine from uracil-55 in the psi GC loop of transfer RNAs. This is tRNA pseudouridine synthase B from Dehalococcoides mccartyi (strain CBDB1).